The following is a 323-amino-acid chain: tRNA-modifying protein YgfZ (323 aa).

The folate site is built by Trp-29 and Trp-182.

It belongs to the tRNA-modifying YgfZ family.

It is found in the cytoplasm. Functionally, folate-binding protein involved in regulating the level of ATP-DnaA and in the modification of some tRNAs. It is probably a key factor in regulatory networks that act via tRNA modification, such as initiation of chromosomal replication. The sequence is that of tRNA-modifying protein YgfZ from Vibrio cholerae serotype O1 (strain M66-2).